A 363-amino-acid polypeptide reads, in one-letter code: Pyrimidine monooxygenase RutA (363 aa).

FMN contacts are provided by residues 49–50 (IK), Asn-115, Glu-124, 140–141 (RY), and Ser-190.

It belongs to the NtaA/SnaA/DszA monooxygenase family. RutA subfamily.

The enzyme catalyses uracil + FMNH2 + NADH + O2 = (Z)-3-ureidoacrylate + FMN + NAD(+) + H2O + H(+). The catalysed reaction is thymine + FMNH2 + NADH + O2 = (Z)-2-methylureidoacrylate + FMN + NAD(+) + H2O + H(+). Its function is as follows. Catalyzes the pyrimidine ring opening between N-3 and C-4 by an unusual flavin hydroperoxide-catalyzed mechanism, adding oxygen atoms in the process to yield ureidoacrylate peracid, that immediately reacts with FMN forming ureidoacrylate and FMN-N(5)-oxide. The FMN-N(5)-oxide reacts spontaneously with NADH to produce FMN. Requires the flavin reductase RutF to regenerate FMN in vivo. The sequence is that of Pyrimidine monooxygenase RutA (rutA) from Agrobacterium fabrum (strain C58 / ATCC 33970) (Agrobacterium tumefaciens (strain C58)).